The chain runs to 245 residues: Thiopurine S-methyltransferase (245 aa).

29–40 (WREKWVDGKIGF) contacts S-adenosyl-L-methionine. F40 is a binding site for substrate. At K58 the chain carries N6-acetyllysine. 3 residues coordinate S-adenosyl-L-methionine: L69, E90, and R152.

It belongs to the class I-like SAM-binding methyltransferase superfamily. TPMT family. As to quaternary structure, monomer.

The protein localises to the cytoplasm. The enzyme catalyses S-adenosyl-L-methionine + a thiopurine = S-adenosyl-L-homocysteine + a thiopurine S-methylether.. The polypeptide is Thiopurine S-methyltransferase (TPMT) (Lynx rufus (Bobcat)).